Reading from the N-terminus, the 601-residue chain is Peptide transporter PTR2 (601 aa).

A compositionally biased stretch (polar residues) spans 1-10; that stretch reads MLNHPSQGSD. Positions 1-66 are disordered; it reads MLNHPSQGSD…DEDFEGPTEE (66 aa). The Extracellular segment spans residues 1–150; sequence MLNHPSQGSD…PVFGGYVADT (150 aa). The span at 14–28 shows a compositional bias: basic and acidic residues; it reads DEKQGDFPVIEEEKT. A Phosphotyrosine modification is found at Y37. A phosphoserine mark is found at S39 and S45. Residues 42 to 53 show a composition bias toward polar residues; that stretch reads VANSTERYNLSP. Residues 55 to 66 show a composition bias toward acidic residues; that stretch reads PEDEDFEGPTEE. Residues 151–172 form a helical membrane-spanning segment; sequence FWGKYNTICCGTAIYIAGIFIL. The Cytoplasmic portion of the chain corresponds to 173–182; that stretch reads FITSIPSVGN. The chain crosses the membrane as a helical span at residues 183 to 202; the sequence is RDSAIGGFIAAIILIGIATG. Residues 203–210 lie on the Extracellular side of the membrane; the sequence is MIKANLSV. Residues 211-229 form a helical membrane-spanning segment; that stretch reads LIADQLPKRKPSIKVLKSG. The Cytoplasmic portion of the chain corresponds to 230 to 267; the sequence is ERVIVDSNITLQNVFMFFYFMINVGSLSLMATTELEYH. Residues 268–287 form a helical membrane-spanning segment; sequence KGFWAAYLLPFCFFWIAVVT. The Extracellular portion of the chain corresponds to 288–294; it reads LIFGKKQ. The chain crosses the membrane as a helical span at residues 295 to 316; the sequence is YIQRPIGDKVIAKSFKVCWILT. At 317 to 378 the chain is on the cytoplasmic side; the sequence is KNKFDFNAAK…ISSFITQASM (62 aa). Residues 379–399 traverse the membrane as a helical segment; it reads MELHGIPNDFLQAFDSIALII. Over 400–412 the chain is Extracellular; it reads FIPIFEKFVYPFI. The helical transmembrane segment at 413 to 429 threads the bilayer; it reads RRYTPLKPITKIFFGFM. Residues 430–448 are Cytoplasmic-facing; that stretch reads FGSFAMTWAAVLQSFVYKA. Residues 449–466 traverse the membrane as a helical segment; it reads GPWYNEPLGHNTPNHVHV. The Extracellular portion of the chain corresponds to 467–494; the sequence is CWQIPAYVLISFSEIFASITGLEYAYSK. The chain crosses the membrane as a helical span at residues 495–513; that stretch reads APASMKSFIMSIFLLTNAF. Topologically, residues 514–526 are cytoplasmic; the sequence is GSAIGCALSPVTV. A helical membrane pass occupies residues 527-547; the sequence is DPKFTWLFTGLAVACFISGCL. At 548–554 the chain is on the extracellular side; the sequence is FWLCFRK. Residues 555–577 traverse the membrane as a helical segment; that stretch reads YNDTEEEMNAMDYEEEDEFDLNP. At 578–601 the chain is on the cytoplasmic side; it reads ISAPKANDIEILEPMESLRSTTKY. Residue S594 is modified to Phosphoserine.

Belongs to the major facilitator superfamily. Proton-dependent oligopeptide transporter (POT/PTR) (TC 2.A.17) family.

It localises to the membrane. Functionally, uptake of small peptides. This Saccharomyces cerevisiae (strain ATCC 204508 / S288c) (Baker's yeast) protein is Peptide transporter PTR2 (PTR2).